The following is a 111-amino-acid chain: Type III endosome membrane protein TEMP (111 aa).

The Extracellular portion of the chain corresponds to 1-27 (MIGGNTTIISGAINASTEAPGLGTGGR). N5 is a glycosylation site (N-linked (GlcNAc...) asparagine). The chain crosses the membrane as a helical; Signal-anchor for type III membrane protein span at residues 28 to 48 (AWPVLVGVVLGAVVLSILIAL). At 49–111 (AAKCHLCRRY…TTGSRDHFSL (63 aa)) the chain is on the cytoplasmic side. The interval 64–111 (HRPLSSAGGGNRPPVGEDEDDDGFIEDNYIQPGAGEMETTGSRDHFSL) is disordered. Over residues 79-88 (GEDEDDDGFI) the composition is skewed to acidic residues.

Expressed in stomach, kidney, large and small intestine and kidney.

The protein localises to the membrane. It is found in the early endosome. Its subcellular location is the recycling endosome. The protein resides in the cell membrane. Functionally, may be involved in membrane trafficking between endosomes and plasma membrane. This Mus musculus (Mouse) protein is Type III endosome membrane protein TEMP.